Here is a 77-residue protein sequence, read N- to C-terminus: Translation initiation factor IF-1, chloroplastic (77 aa).

Residues 1 to 71 (MKEQKLIHEG…TRGRIIYRLR (71 aa)) form the S1-like domain.

The protein belongs to the IF-1 family. As to quaternary structure, component of the 30S ribosomal translation pre-initiation complex which assembles on the 30S ribosome in the order IF-2 and IF-3, IF-1 and N-formylmethionyl-tRNA(fMet); mRNA recruitment can occur at any time during PIC assembly.

It is found in the plastid. The protein localises to the chloroplast. In terms of biological role, one of the essential components for the initiation of protein synthesis. Stabilizes the binding of IF-2 and IF-3 on the 30S subunit to which N-formylmethionyl-tRNA(fMet) subsequently binds. Helps modulate mRNA selection, yielding the 30S pre-initiation complex (PIC). Upon addition of the 50S ribosomal subunit IF-1, IF-2 and IF-3 are released leaving the mature 70S translation initiation complex. This chain is Translation initiation factor IF-1, chloroplastic, found in Phalaenopsis aphrodite subsp. formosana (Moth orchid).